Consider the following 353-residue polypeptide: uncharacterized protein (353 aa).

A signal peptide spans 1 to 30; the sequence is MHLRHLFSLRLRGSLLLGSLLVASSFSTQA.

This is an uncharacterized protein from Escherichia coli O157:H7.